Here is a 171-residue protein sequence, read N- to C-terminus: Shikimate kinase (171 aa).

Residue G14–T19 participates in ATP binding. S18 serves as a coordination point for Mg(2+). D36, R60, and G82 together coordinate substrate. R120 is a binding site for ATP. R139 is a binding site for substrate. ATP is bound at residue Q156.

This sequence belongs to the shikimate kinase family. As to quaternary structure, monomer. The cofactor is Mg(2+).

The protein localises to the cytoplasm. It carries out the reaction shikimate + ATP = 3-phosphoshikimate + ADP + H(+). It functions in the pathway metabolic intermediate biosynthesis; chorismate biosynthesis; chorismate from D-erythrose 4-phosphate and phosphoenolpyruvate: step 5/7. Functionally, catalyzes the specific phosphorylation of the 3-hydroxyl group of shikimic acid using ATP as a cosubstrate. This Pseudoalteromonas atlantica (strain T6c / ATCC BAA-1087) protein is Shikimate kinase.